The sequence spans 824 residues: Ras guanine nucleotide exchange factor I (824 aa).

2 disordered regions span residues 1-51 (MSNP…KPTK) and 65-167 (GSNL…LILD). Residues 8 to 41 (SNSTNGSSNSLNGESVSPNRLGSSPGSPISKASS) show a composition bias toward low complexity. Over residues 83–95 (NSSVGLLNNSTGS) the composition is skewed to polar residues. Positions 104–116 (SSPKSSYILSSSI) are enriched in low complexity. Gly residues predominate over residues 117–128 (GSGGSGGGGGSS). A compositionally biased stretch (low complexity) spans 136–167 (SASNNSSGPRSRSGSLGKNNSSQQNNNNLILD). Positions 223-255 (GRDNILQLILQHLQFEGLMDSRKILEEEAKIQY) constitute a LisH domain. Disordered stretches follow at residues 330 to 354 (YVDE…TTAT) and 398 to 425 (NTQQ…STGT). Over residues 331 to 341 (VDEKDNDKPSK) the composition is skewed to basic and acidic residues. Residues 343 to 354 (SPTTATTTTTAT) are compositionally biased toward low complexity. Positions 413–425 (LKSTQSITGSTGT) are enriched in polar residues. The region spanning 426 to 551 (LGPQVKAASL…VISDALNSGL (126 aa)) is the N-terminal Ras-GEF domain. Residues 585–816 (DEEEISRQLT…YTRSMSFEPR (232 aa)) enclose the Ras-GEF domain.

In terms of biological role, promotes the exchange of Ras-bound GDP by GTP. The protein is Ras guanine nucleotide exchange factor I (gefI) of Dictyostelium discoideum (Social amoeba).